The following is a 562-amino-acid chain: Oligo-1,6-glucosidase (562 aa).

D21, N23, D25, and D29 together coordinate Ca(2+). The Nucleophile role is filled by D199. E256 acts as the Proton donor in catalysis.

The protein belongs to the glycosyl hydrolase 13 family.

It is found in the cytoplasm. It carries out the reaction Hydrolysis of (1-&gt;6)-alpha-D-glucosidic linkages in some oligosaccharides produced from starch and glycogen by alpha-amylase, and in isomaltose.. In Parageobacillus thermoglucosidasius (Geobacillus thermoglucosidasius), this protein is Oligo-1,6-glucosidase (malL).